A 1335-amino-acid chain; its full sequence is Regulatory-associated protein of mTOR (1335 aa).

Residues S44 and S122 each carry the phosphoserine modification. S696 is modified (phosphoserine; by MAPK8). T700 is a glycosylation site (O-linked (GlcNAc) threonine). The residue at position 706 (T706) is a Phosphothreonine; by MAPK8. A phosphoserine; by RPS6KA1 mark is found at S719 and S721. S722 is modified (phosphoserine; by AMPK and RPS6KA1). S738 bears the Phosphoserine mark. Residues 749 to 771 (GSSVAFSPGNLSTSSSASSTLGS) are disordered. Positions 755–771 (SPGNLSTSSSASSTLGS) are enriched in low complexity. Residue S791 is modified to Phosphoserine. The residue at position 792 (S792) is a Phosphoserine; by AMPK. Phosphoserine is present on residues S836 and S855. Over residues 853–866 (TSSLTQSAPASPTN) the composition is skewed to polar residues. Residues 853-942 (TSSLTQSAPA…GPDQTTDDAD (90 aa)) are disordered. Residue S859 is modified to Phosphoserine; by MTOR. Residue S863 is modified to Phosphoserine; by MAPK8, MTOR and NLK. T865 bears the Phosphothreonine mark. S877 bears the Phosphoserine mark. The segment covering 877-887 (SPPASSTSSCS) has biased composition (low complexity). The segment covering 888 to 898 (LTNDVAKQTVS) has biased composition (polar residues). Residues K932 and K948 each participate in a glycyl lysine isopeptide (Lys-Gly) (interchain with G-Cter in ubiquitin) cross-link. S982 bears the Phosphoserine mark. 7 WD repeats span residues 1020 to 1061 (NRNP…DYFH), 1065 to 1106 (PRYT…EKNP), 1121 to 1160 (TTRG…KVQD), 1164 to 1203 (GADS…SECR), 1209 to 1249 (EHTA…SVNV), 1251 to 1291 (QIVK…NNIK), and 1299 to 1335 (QRVG…KRVR). At K1097 the chain carries N6-acetyllysine.

Belongs to the WD repeat RAPTOR family. In terms of assembly, part of the mechanistic target of rapamycin complex 1 (mTORC1) which contains MTOR, MLST8 and RPTOR. mTORC1 associates with AKT1S1/PRAS40, which inhibits its activity. mTORC1 associates with DEPTOR, which regulates its activity. mTORC1 binds to and is inhibited by FKBP12-rapamycin. Forms a complex with MTOR under both leucine-rich and -poor conditions. Interacts with (via TOS motifs) EIF4EBP1 and RPS6KB1; interaction is independent of its association with MTOR. Binds preferentially to poorly or non-phosphorylated forms of EIF4EBP1, and this binding is critical to the ability of MTOR to catalyze phosphorylation. Interacts with ULK1 in a nutrient-dependent manner; the interaction is reduced during starvation. Interacts with GTP-bound form of RagA/RRAGA or RagB/RRAGB and GDP-bound form of RagC/RRAGC or RagD/RRAGD, promoting recruitment of mTORC1 to the lysosomes. Interacts (when phosphorylated by AMPK) with 14-3-3 protein, leading to inhibition of its activity. Interacts with SPAG5; SPAG5 competes with MTOR for RPTOR-binding, resulting in decreased mTORC1 formation. Interacts with WAC; WAC positively regulates MTOR activity by promoting the assembly of the TTT complex composed of TELO2, TTI1 and TTI2 and the RUVBL complex composed of RUVBL1 and RUVBL2 into the TTT-RUVBL complex which leads to the dimerization of the mTORC1 complex and its subsequent activation. Interacts with G3BP1. The complex formed with G3BP1 and SPAG5 is increased by oxidative stress. Interacts with HTR6. Interacts with PIH1D1. Interacts with LARP1. Interacts with BRAT1. Interacts with SIK3. Interacts with SLC38A7; this interaction mediates the recruitment of mTORC1 to the lysosome and its subsequent activation. Post-translationally, insulin-stimulated phosphorylation at Ser-863 by MTOR and MAPK8 regulates mTORC1 activity. Phosphorylated at Ser-863 by NLK in response to stress, disrupting the interaction with small GTPases Rag (RagA/RRAGA, RagB/RRAGB, RagC/RRAGC and/or RagD/RRAGD), thereby preventing lysosome recruitment and activation of the mTORC1 complex. Osmotic stress also induces phosphorylation at Ser-696, Thr-706 and Ser-863 by MAPK8. Ser-863 phosphorylation is required for phosphorylation at Ser-855 and Ser-859. In response to nutrient limitation, phosphorylated at Ser-722 and Ser-792 by AMPK; phosphorylation promotes interaction with 14-3-3 proteins, leading to negative regulation of the mTORC1 complex. Phosphorylation at Ser-722 and Ser-792 by AMPK in response to glucose starvation inhibits O-GlcNAcylation by OGT and subsequent activation of mTORC1. In response to growth factors, phosphorylated at Ser-719, Ser-721 and Ser-722 by RPS6KA1, which stimulates mTORC1 activity. Phosphorylation at Ser-791 by PKA downstream of cAMP inhibits the mTORC1 complex. Phosphorylated at Ser-877 by TBK1, leading to negative regulation of the mTORC1 complex. In terms of processing, O-GlcNAcylated by OGT upon glucose sufficiency, promoting interaction with small GTPases Rag (RagA/RRAGA, RagB/RRAGB, RagC/RRAGC and/or RagD/RRAGD) and subsequent recruitment of mTORC1 to lysosomal membranes, leading to activation of the mTORC1 complex. Phosphorylation at Ser-722 and Ser-792 by AMPK in response to glucose starvation inhibits O-GlcNAcylation. Acetylation at Lys-1097 by EP300/p300 in response to leucine metabolite acetyl-coA promotes its activity, leading to activation of the mTORC1 complex. Acetylation is decreased in response to fasting. Phosphorylated at Ser-877 by TBK1, leading to negative regulation of the mTORC1 complex. Post-translationally, ubiquitinated, leading to its degradation by the proteasome. Deubiquitinated by OTUB1 via a non-catalytic mechanism. Ubiquitinated by an E3 ubiquitin ligase complex containing VHL.

It is found in the cytoplasm. The protein resides in the lysosome. It localises to the cytoplasmic granule. In terms of biological role, component of the mechanistic target of rapamycin complex 1 (mTORC1), an evolutionarily conserved central nutrient sensor that stimulates anabolic reactions and macromolecule biosynthesis to promote cellular biomass generation and growth. In response to nutrients, growth factors or amino acids, mTORC1 is recruited to the lysosome membrane and promotes protein, lipid and nucleotide synthesis by phosphorylating several substrates, such as ribosomal protein S6 kinase (RPS6KB1 and RPS6KB2) and EIF4EBP1 (4E-BP1). In the same time, it inhibits catabolic pathways by phosphorylating the autophagy initiation components ULK1 and ATG13, as well as transcription factor TFEB, a master regulators of lysosomal biogenesis and autophagy. The mTORC1 complex is inhibited in response to starvation and amino acid depletion. Within the mTORC1 complex, RPTOR acts both as a molecular adapter, which (1) mediates recruitment of mTORC1 to lysosomal membranes via interaction with small GTPases Rag (RagA/RRAGA, RagB/RRAGB, RagC/RRAGC and/or RagD/RRAGD), and a (2) substrate-specific adapter, which promotes substrate specificity by binding to TOS motif-containing proteins and direct them towards the active site of the MTOR kinase domain for phosphorylation. mTORC1 complex regulates many cellular processes, such as odontoblast and osteoclast differentiation or neuronal transmission. mTORC1 complex in excitatory neuronal transmission is required for the prosocial behavior induced by the psychoactive substance lysergic acid diethylamide (LSD). This Mus musculus (Mouse) protein is Regulatory-associated protein of mTOR.